A 71-amino-acid polypeptide reads, in one-letter code: Beta-defensin 10 (71 aa).

A signal peptide spans 1 to 23 (MKTLCSLLLIGCLLFSYDTPVVG). 3 cysteine pairs are disulfide-bonded: Cys-37-Cys-66, Cys-44-Cys-59, and Cys-49-Cys-67.

It belongs to the beta-defensin family.

The protein resides in the secreted. Functionally, has antibacterial activity. The protein is Beta-defensin 10 (Defb10) of Rattus norvegicus (Rat).